The chain runs to 227 residues: 2-C-methyl-D-erythritol 4-phosphate cytidylyltransferase (227 aa).

It belongs to the IspD/TarI cytidylyltransferase family. IspD subfamily.

It carries out the reaction 2-C-methyl-D-erythritol 4-phosphate + CTP + H(+) = 4-CDP-2-C-methyl-D-erythritol + diphosphate. Its pathway is isoprenoid biosynthesis; isopentenyl diphosphate biosynthesis via DXP pathway; isopentenyl diphosphate from 1-deoxy-D-xylulose 5-phosphate: step 2/6. In terms of biological role, catalyzes the formation of 4-diphosphocytidyl-2-C-methyl-D-erythritol from CTP and 2-C-methyl-D-erythritol 4-phosphate (MEP). This chain is 2-C-methyl-D-erythritol 4-phosphate cytidylyltransferase, found in Lachnospira eligens (strain ATCC 27750 / DSM 3376 / VPI C15-48 / C15-B4) (Eubacterium eligens).